The following is a 75-amino-acid chain: Small ribosomal subunit protein bS18 (75 aa).

This sequence belongs to the bacterial ribosomal protein bS18 family. Part of the 30S ribosomal subunit. Forms a tight heterodimer with protein bS6.

Functionally, binds as a heterodimer with protein bS6 to the central domain of the 16S rRNA, where it helps stabilize the platform of the 30S subunit. The chain is Small ribosomal subunit protein bS18 from Methylobacillus flagellatus (strain ATCC 51484 / DSM 6875 / VKM B-1610 / KT).